We begin with the raw amino-acid sequence, 308 residues long: MIIVTGGFGMIGSNIVKALNEIGRKDILVVDNLKNGEKFVNLVDLDIADYCDKEDFIASIIAGDDFGEIDAVFHEGACSATTEWDGKYLMHNNYEYSKELLHFCLDHQIPFFYASSAATYGGRSDNFIEERKFEQPLNAYGYSKFLFDEYVRQVLPEADSPVCGFKYFNVYGPREQHKGSMASVAFHLNNQMLKGENPKLFEGSETFLRDFVYVEDVAKVNIWAWQNGISGIYNLGTGKAESFQAVAQAVIDFHGKGEIEKIPFPDHLKSRYQTFTQADLTKLRAAGYTGTFKTVAEGTKEYMAWLNR.

Residues 10–11, 31–32, K38, K53, 75–79, and N92 contribute to the NADP(+) site; these read MI, DN, and EGACS. The Proton acceptor role is filled by Y140. K144 serves as a coordination point for NADP(+). N169 is a binding site for substrate. V170 and K178 together coordinate NADP(+). K178 acts as the Proton acceptor in catalysis. Residues S180, H187, 201-204, R209, and Y272 each bind substrate; that span reads FEGS.

This sequence belongs to the NAD(P)-dependent epimerase/dehydratase family. HldD subfamily. As to quaternary structure, homopentamer. Requires NADP(+) as cofactor.

The catalysed reaction is ADP-D-glycero-beta-D-manno-heptose = ADP-L-glycero-beta-D-manno-heptose. It participates in nucleotide-sugar biosynthesis; ADP-L-glycero-beta-D-manno-heptose biosynthesis; ADP-L-glycero-beta-D-manno-heptose from D-glycero-beta-D-manno-heptose 7-phosphate: step 4/4. Functionally, catalyzes the interconversion between ADP-D-glycero-beta-D-manno-heptose and ADP-L-glycero-beta-D-manno-heptose via an epimerization at carbon 6 of the heptose. This chain is ADP-L-glycero-D-manno-heptose-6-epimerase, found in Actinobacillus pleuropneumoniae serotype 5b (strain L20).